Reading from the N-terminus, the 161-residue chain is Allophycocyanin alpha chain (161 aa).

An N4-methylasparagine modification is found at Asn71. Residue Cys81 participates in (2R,3E)-phycocyanobilin binding.

It belongs to the phycobiliprotein family. As to quaternary structure, heterodimer of an alpha and a beta chain. Contains one covalently linked phycocyanobilin chromophore.

The protein localises to the plastid. It is found in the chloroplast thylakoid membrane. Its function is as follows. Light-harvesting photosynthetic bile pigment-protein from the phycobiliprotein complex. Allophycocyanin has a maximum absorption at approximately 650 nanometers. The sequence is that of Allophycocyanin alpha chain (apcA) from Cyanidium caldarium (Red alga).